The following is a 562-amino-acid chain: Bifunctional coenzyme A synthase (562 aa).

2 positions are modified to phosphoserine: S177 and S182. The interval 179–357 is phosphopantetheine adenylyltransferase; sequence VARSAKQPVR…HKRPELPPGC (179 aa). One can recognise a DPCK domain in the interval 359 to 562; the sequence is VIGLTGISGS…KRISEAPSDP (204 aa). 364-371 provides a ligand contact to ATP; sequence GISGSGKS.

It in the central section; belongs to the eukaryotic CoaD family. As to quaternary structure, monomer. The N-terminus is blocked.

Its subcellular location is the cytoplasm. It localises to the mitochondrion matrix. It catalyses the reaction (R)-4'-phosphopantetheine + ATP + H(+) = 3'-dephospho-CoA + diphosphate. It carries out the reaction 3'-dephospho-CoA + ATP = ADP + CoA + H(+). It participates in cofactor biosynthesis; coenzyme A biosynthesis; CoA from (R)-pantothenate: step 4/5. The protein operates within cofactor biosynthesis; coenzyme A biosynthesis; CoA from (R)-pantothenate: step 5/5. Functionally, bifunctional enzyme that catalyzes the fourth and fifth sequential steps of CoA biosynthetic pathway. The fourth reaction is catalyzed by the phosphopantetheine adenylyltransferase, coded by the coaD domain; the fifth reaction is catalyzed by the dephospho-CoA kinase, coded by the coaE domain. May act as a point of CoA biosynthesis regulation. The sequence is that of Bifunctional coenzyme A synthase from Sus scrofa (Pig).